Reading from the N-terminus, the 570-residue chain is Sulfite reductase [NADPH] hemoprotein beta-component (570 aa).

Residues Cys-434, Cys-440, Cys-479, and Cys-483 each coordinate [4Fe-4S] cluster. Cys-483 serves as a coordination point for siroheme.

The protein belongs to the nitrite and sulfite reductase 4Fe-4S domain family. In terms of assembly, alpha(8)-beta(8). The alpha component is a flavoprotein, the beta component is a hemoprotein. Requires siroheme as cofactor. [4Fe-4S] cluster serves as cofactor.

The enzyme catalyses hydrogen sulfide + 3 NADP(+) + 3 H2O = sulfite + 3 NADPH + 4 H(+). It participates in sulfur metabolism; hydrogen sulfide biosynthesis; hydrogen sulfide from sulfite (NADPH route): step 1/1. In terms of biological role, component of the sulfite reductase complex that catalyzes the 6-electron reduction of sulfite to sulfide. This is one of several activities required for the biosynthesis of L-cysteine from sulfate. This Escherichia coli (strain ATCC 8739 / DSM 1576 / NBRC 3972 / NCIMB 8545 / WDCM 00012 / Crooks) protein is Sulfite reductase [NADPH] hemoprotein beta-component.